A 1896-amino-acid polypeptide reads, in one-letter code: Plexin-A1 (1896 aa).

The signal sequence occupies residues 1–26 (MPLPPRSLQVLLLLLLLLLLLPGMWA). A Sema domain is found at 27–512 (EAGLPRAGGG…TEKQVTRVPV (486 aa)). Residues 27 to 1244 (EAGLPRAGGG…VYSDSLLTLP (1218 aa)) lie on the Extracellular side of the membrane. Asn-77 carries an N-linked (GlcNAc...) asparagine glycan. 10 cysteine pairs are disulfide-bonded: Cys-95/Cys-104, Cys-130/Cys-138, Cys-286/Cys-407, Cys-302/Cys-358, Cys-376/Cys-395, Cys-515/Cys-532, Cys-521/Cys-563, Cys-524/Cys-541, Cys-535/Cys-547, and Cys-598/Cys-617. Residues Asn-660, Asn-672, and Asn-701 are each glycosylated (N-linked (GlcNAc...) asparagine). 4 IPT/TIG domains span residues 864–959 (PKIL…FTFV), 961–1045 (PTFY…YNYT), 1048–1147 (PTIL…FLYY), and 1150–1236 (PVLE…LQVY). N-linked (GlcNAc...) asparagine glycosylation is present at Asn-1043. Asn-1187 and Asn-1212 each carry an N-linked (GlcNAc...) asparagine glycan. A helical transmembrane segment spans residues 1245-1265 (AIVGIGGGGGLLLLVIVAVLI). Residues 1264 to 1317 (LIAYKRKSRDADRTLKRLQLQMDNLESRVALECKEAFAELQTDIHELTNDLDGA) adopt a coiled-coil conformation. At 1266–1896 (AYKRKSRDAD…QVVDTMALSS (631 aa)) the chain is on the cytoplasmic side.

It belongs to the plexin family. As to quaternary structure, interacts directly with NRP1 and NRP2. Interacts with PLXN1B. Interacts with FARP2, RND1 and KDR/VEGFR2. Binding of SEMA3A leads to dissociation of FARP2. Interacts with CRMP1, DPYSL2/CRMP2, DPYSL3/CRMP3 and DPYSL4/CRMP4. Interacts (via TIG domains) with TREM2; the interaction mediates SEMA6D binding and signaling through TYROBP. Detected in fetal brain, lung, liver and kidney.

The protein localises to the cell membrane. Functionally, coreceptor for SEMA3A, SEMA3C, SEMA3F and SEMA6D. Necessary for signaling by class 3 semaphorins and subsequent remodeling of the cytoskeleton. Plays a role in axon guidance, invasive growth and cell migration. Class 3 semaphorins bind to a complex composed of a neuropilin and a plexin. The plexin modulates the affinity of the complex for specific semaphorins, and its cytoplasmic domain is required for the activation of down-stream signaling events in the cytoplasm. Acts as coreceptor of TREM2 for SEMA6D in dendritic cells and is involved in the generation of immune responses and skeletal homeostasis. The protein is Plexin-A1 of Homo sapiens (Human).